Consider the following 354-residue polypeptide: Pyrimidine monooxygenase RutA (354 aa).

FMN-binding positions include Ile-49–Lys-50, Asn-115, Glu-124, Arg-140–Tyr-141, and Ser-189.

Belongs to the NtaA/SnaA/DszA monooxygenase family. RutA subfamily.

It catalyses the reaction uracil + FMNH2 + NADH + O2 = (Z)-3-ureidoacrylate + FMN + NAD(+) + H2O + H(+). The catalysed reaction is thymine + FMNH2 + NADH + O2 = (Z)-2-methylureidoacrylate + FMN + NAD(+) + H2O + H(+). Catalyzes the pyrimidine ring opening between N-3 and C-4 by an unusual flavin hydroperoxide-catalyzed mechanism, adding oxygen atoms in the process to yield ureidoacrylate peracid, that immediately reacts with FMN forming ureidoacrylate and FMN-N(5)-oxide. The FMN-N(5)-oxide reacts spontaneously with NADH to produce FMN. Requires the flavin reductase RutF to regenerate FMN in vivo. In Caulobacter sp. (strain K31), this protein is Pyrimidine monooxygenase RutA.